The sequence spans 245 residues: 8-amino-3,8-dideoxy-manno-octulosonate cytidylyltransferase (245 aa).

The protein belongs to the KdsB family.

It is found in the cytoplasm. It carries out the reaction 8-amino-3,8-dideoxy-alpha-D-manno-octulosonate + CTP = CMP-8-amino-3,8-dideoxy-alpha-D-manno-oct-2-ulosonate + diphosphate. It participates in bacterial outer membrane biogenesis; lipopolysaccharide biosynthesis. Activates KDO8N (a required 8-carbon sugar) for incorporation into bacterial lipopolysaccharide in the Shewanella genus. The protein is 8-amino-3,8-dideoxy-manno-octulosonate cytidylyltransferase of Shewanella oneidensis (strain ATCC 700550 / JCM 31522 / CIP 106686 / LMG 19005 / NCIMB 14063 / MR-1).